A 190-amino-acid chain; its full sequence is MADSLIQSPDLGDVTGYLRDRIRTVPDWPMPGVQFRDITPLLQNPKTLRVLIDVFVHRYMDAQLDLVAGIDARGFILGAIVAYELNLGFVPIRKKGKLPFQTVAEEYELEYGSATVEIHADACKPGDRVLLIDDLIATGGTMMAGRKLLERLGATVVEGAAIVDLPELGGSKLLQNAGLPLFTVCRFDGH.

This sequence belongs to the purine/pyrimidine phosphoribosyltransferase family. As to quaternary structure, homodimer.

Its subcellular location is the cytoplasm. It carries out the reaction AMP + diphosphate = 5-phospho-alpha-D-ribose 1-diphosphate + adenine. It functions in the pathway purine metabolism; AMP biosynthesis via salvage pathway; AMP from adenine: step 1/1. Its function is as follows. Catalyzes a salvage reaction resulting in the formation of AMP, that is energically less costly than de novo synthesis. In Cupriavidus pinatubonensis (strain JMP 134 / LMG 1197) (Cupriavidus necator (strain JMP 134)), this protein is Adenine phosphoribosyltransferase.